A 302-amino-acid polypeptide reads, in one-letter code: MWFRNLIPYRLRDQVAYDPETADQRLAALAFTPCGALEPSRSGFVPPLGPGAPLVHAAAGSLLFCLQEETKLLPAAVIREAMDERIGAVEAAEHRKVRKRERDRIRDEVVTDLMPRAFSRHKRTWGYLDTEAGYLVVDAGSEKQAEHFVEQLREAWGDLTLSPPETEMGPGTIMTRWLAQQQLPGDLELGEEAVLEDPNAEGCEVRVKRQDLTSEEMRAHIDAGKRVRRLAVTYSERLSAVIDTDLSLRRLKFHDVIREQAGDRDPESQAEQLDADFSLMTLELRTLIPRLMEWFGGEKAPS.

This sequence belongs to the RdgC family.

It is found in the cytoplasm. It localises to the nucleoid. In terms of biological role, may be involved in recombination. The chain is Recombination-associated protein RdgC from Halorhodospira halophila (strain DSM 244 / SL1) (Ectothiorhodospira halophila (strain DSM 244 / SL1)).